Consider the following 268-residue polypeptide: Mediator of RNA polymerase II transcription subunit 8-A (268 aa).

Coiled-coil stretches lie at residues Met1–Leu26 and Val117–Glu160. A disordered region spans residues Gly190–Arg268. Residues Val223–Gln246 show a composition bias toward polar residues.

The protein belongs to the Mediator complex subunit 8 family. Component of the Mediator complex. May be part of a multisubunit E3 ubiquitin-protein ligase complex.

The protein localises to the nucleus. Its pathway is protein modification; protein ubiquitination. Component of the Mediator complex, a coactivator involved in the regulated transcription of nearly all RNA polymerase II-dependent genes. Mediator functions as a bridge to convey information from gene-specific regulatory proteins to the basal RNA polymerase II transcription machinery. Mediator is recruited to promoters by direct interactions with regulatory proteins and serves as a scaffold for the assembly of a functional preinitiation complex with RNA polymerase II and the general transcription factors. May play a role as a target recruitment subunit in E3 ubiquitin-protein ligase complexes and thus in ubiquitination and subsequent proteasomal degradation of target proteins. The polypeptide is Mediator of RNA polymerase II transcription subunit 8-A (med8-a) (Xenopus laevis (African clawed frog)).